The following is a 183-amino-acid chain: ATP synthase subunit delta (183 aa).

It belongs to the ATPase delta chain family. F-type ATPases have 2 components, F(1) - the catalytic core - and F(0) - the membrane proton channel. F(1) has five subunits: alpha(3), beta(3), gamma(1), delta(1), epsilon(1). F(0) has three main subunits: a(1), b(2) and c(10-14). The alpha and beta chains form an alternating ring which encloses part of the gamma chain. F(1) is attached to F(0) by a central stalk formed by the gamma and epsilon chains, while a peripheral stalk is formed by the delta and b chains.

The protein resides in the cell membrane. In terms of biological role, f(1)F(0) ATP synthase produces ATP from ADP in the presence of a proton or sodium gradient. F-type ATPases consist of two structural domains, F(1) containing the extramembraneous catalytic core and F(0) containing the membrane proton channel, linked together by a central stalk and a peripheral stalk. During catalysis, ATP synthesis in the catalytic domain of F(1) is coupled via a rotary mechanism of the central stalk subunits to proton translocation. Its function is as follows. This protein is part of the stalk that links CF(0) to CF(1). It either transmits conformational changes from CF(0) to CF(1) or is implicated in proton conduction. The polypeptide is ATP synthase subunit delta (Halalkalibacterium halodurans (strain ATCC BAA-125 / DSM 18197 / FERM 7344 / JCM 9153 / C-125) (Bacillus halodurans)).